The chain runs to 247 residues: 5'-nucleotidase SurE (247 aa).

Asp8, Asp9, Ser39, and Asn91 together coordinate a divalent metal cation.

It belongs to the SurE nucleotidase family. The cofactor is a divalent metal cation.

It localises to the cytoplasm. The catalysed reaction is a ribonucleoside 5'-phosphate + H2O = a ribonucleoside + phosphate. Functionally, nucleotidase that shows phosphatase activity on nucleoside 5'-monophosphates. In Laribacter hongkongensis (strain HLHK9), this protein is 5'-nucleotidase SurE.